The sequence spans 403 residues: Signal-transducing adaptor protein 2 (403 aa).

In terms of domain architecture, PH spans 18–130 (PSHYYESFLE…VPTDLTLLPG (113 aa)). Tyrosine 22 carries the post-translational modification Phosphotyrosine; by SRC. In terms of domain architecture, SH2 spans 133–248 (YMMSEVLAKE…KALVPFLLDE (116 aa)). At tyrosine 250 the chain carries Phosphotyrosine; by PTK6. The disordered stretch occupies residues 270 to 308 (APSAPGPGPAPCTGGPKPLSPASSQDKLPPLPPLPNQEE). Phosphotyrosine is present on tyrosine 310. Tyrosine 322 carries the phosphotyrosine; by SRC modification. The disordered stretch occupies residues 331 to 374 (SWPVILKPKKLPKPPAKLPKPPVGPKPEPKVFNGGLGRKLPVSS). The span at 343 to 356 (KPPAKLPKPPVGPK) shows a compositional bias: pro residues. A coiled-coil region spans residues 382 to 402 (AGLADMTAELQKKLEKRRALE).

Interacts with PTK6 and CSF1R. In terms of processing, phosphorylated on tyrosine. Tyr-250 may be important for interaction with kinases. Phosphorylated by PTK6 at Tyr-250 modulates PTK6-mediated STAT3 activation. Tyr-22 and Tyr-322 appears to be phosphorylated by SRC. Widely expressed.

It is found in the cytoplasm. Substrate of protein kinase PTK6. May play a regulatory role in the acute-phase response in systemic inflammation and may modulate STAT3 activity. The sequence is that of Signal-transducing adaptor protein 2 (STAP2) from Homo sapiens (Human).